A 138-amino-acid polypeptide reads, in one-letter code: Protein Turandot B (138 aa).

The N-terminal stretch at 1–21 (MNFKTSLICFALLLIGTLCSA) is a signal peptide.

Belongs to the Turandot family.

It is found in the secreted. Its function is as follows. A humoral factor that may play a role in stress tolerance. The protein is Protein Turandot B of Drosophila melanogaster (Fruit fly).